The chain runs to 409 residues: Aspartic protease pepA (409 aa).

The signal sequence occupies residues 1–19 (MPSIVSLTAALTFVGAVIA). Positions 20 to 65 (SPVEKRSAFSVEQVPHTTYLKNGPAQKVKTLRKYGKPVPQSLLDAA) are cleaved as a propeptide — activation peptide. Positions 97 to 404 (YLSPVTVGST…PDSPPRIGLA (308 aa)) constitute a Peptidase A1 domain. Catalysis depends on residues aspartate 113 and aspartate 293. A disulfide bridge links cysteine 329 with cysteine 364. Residue asparagine 335 is glycosylated (N-linked (GlcNAc...) asparagine).

It belongs to the peptidase A1 family. As to quaternary structure, monomer.

The protein localises to the secreted. Secreted aspartic endopeptidase that allows assimilation of proteinaceous substrates. The scissile peptide bond is attacked by a nucleophilic water molecule activated by two aspartic residues in the active site. Shows a broad primary substrate specificity. Favors hydrophobic residues at the P1 and P1' positions. The sequence is that of Aspartic protease pepA from Leptosphaeria maculans (strain JN3 / isolate v23.1.3 / race Av1-4-5-6-7-8) (Blackleg fungus).